Here is a 109-residue protein sequence, read N- to C-terminus: GPRTRRVKRSHNGKNGSPEEKRPRTAFSAEQLARLKREFAENRYLTERRRQQLSRDLGLTEAQIKIWFQNKRAKIKKASGQKNPLALQLMAQGLYNHSTVPVDEDGEEI.

Residues 1–12 are compositionally biased toward basic residues; the sequence is GPRTRRVKRSHN. The tract at residues 1 to 27 is disordered; it reads GPRTRRVKRSHNGKNGSPEEKRPRTAF. A DNA-binding region (homeobox) is located at residues 20–79; that stretch reads EKRPRTAFSAEQLARLKREFAENRYLTERRRQQLSRDLGLTEAQIKIWFQNKRAKIKKAS.

This sequence belongs to the engrailed homeobox family.

Its subcellular location is the nucleus. The chain is Homeobox protein E30 from Apis mellifera (Honeybee).